Here is a 292-residue protein sequence, read N- to C-terminus: Shikimate dehydrogenase (NADP(+)) (292 aa).

Shikimate contacts are provided by residues 25–27 (SKS) and Thr-72. Residue Lys-76 is the Proton acceptor of the active site. Shikimate contacts are provided by Asn-97 and Asp-113. NADP(+)-binding positions include 137–141 (GAGGA), 161–166 (NRTQSK), and Met-230. Tyr-232 contributes to the shikimate binding site. Gly-254 provides a ligand contact to NADP(+).

Belongs to the shikimate dehydrogenase family. Homodimer.

The enzyme catalyses shikimate + NADP(+) = 3-dehydroshikimate + NADPH + H(+). It functions in the pathway metabolic intermediate biosynthesis; chorismate biosynthesis; chorismate from D-erythrose 4-phosphate and phosphoenolpyruvate: step 4/7. Involved in the biosynthesis of the chorismate, which leads to the biosynthesis of aromatic amino acids. Catalyzes the reversible NADPH linked reduction of 3-dehydroshikimate (DHSA) to yield shikimate (SA). This is Shikimate dehydrogenase (NADP(+)) from Shewanella sp. (strain MR-4).